We begin with the raw amino-acid sequence, 462 residues long: Cysteine--tRNA ligase (462 aa).

Position 28 (Cys28) interacts with Zn(2+). A 'HIGH' region motif is present at residues 30-40 (MTVYDYCHIGH). Zn(2+)-binding residues include Cys209, His234, and Glu238. The 'KMSKS' region signature appears at 266 to 270 (KMSKS). Lys269 lines the ATP pocket.

The protein belongs to the class-I aminoacyl-tRNA synthetase family. In terms of assembly, monomer. It depends on Zn(2+) as a cofactor.

The protein localises to the cytoplasm. It carries out the reaction tRNA(Cys) + L-cysteine + ATP = L-cysteinyl-tRNA(Cys) + AMP + diphosphate. The sequence is that of Cysteine--tRNA ligase from Pseudomonas fluorescens (strain SBW25).